Reading from the N-terminus, the 115-residue chain is Replication initiation control protein YabA (115 aa).

Zn(2+)-binding residues include H85, C87, C101, and C104.

This sequence belongs to the YabA family. In terms of assembly, homotetramer. Interacts with both DnaA and DnaN, acting as a bridge between these two proteins. Requires Zn(2+) as cofactor.

The protein resides in the cytoplasm. It localises to the nucleoid. Involved in control of chromosome replication initiation. Inhibits the cooperative binding of DnaA to the oriC region, thus negatively regulating initiation of chromosome replication. Inhibits the ability of DnaA-ATP to form a helix on DNA; does not disassemble preformed DnaA-DNA helices. Decreases the residence time of DnaA on the chromosome at its binding sites (oriC, replication forks and promoter-binding sites). Tethers DnaA to the replication machinery via the DNA polymerase beta sliding clamp subunit (dnaN). Associates with oriC and other DnaA targets on the chromosome in a DnaA-dependent manner. The protein is Replication initiation control protein YabA of Lactiplantibacillus plantarum (strain ATCC BAA-793 / NCIMB 8826 / WCFS1) (Lactobacillus plantarum).